The chain runs to 427 residues: Trigger factor (427 aa).

Residues 163-248 form the PPIase FKBP-type domain; that stretch reads GDTVVIDFVG…VHEVKAKEVP (86 aa).

This sequence belongs to the FKBP-type PPIase family. Tig subfamily.

Its subcellular location is the cytoplasm. The enzyme catalyses [protein]-peptidylproline (omega=180) = [protein]-peptidylproline (omega=0). Functionally, involved in protein export. Acts as a chaperone by maintaining the newly synthesized protein in an open conformation. Functions as a peptidyl-prolyl cis-trans isomerase. This Streptococcus equi subsp. equi (strain 4047) protein is Trigger factor.